The following is a 171-amino-acid chain: Adenine phosphoribosyltransferase (171 aa).

This sequence belongs to the purine/pyrimidine phosphoribosyltransferase family. In terms of assembly, homodimer.

Its subcellular location is the cytoplasm. The enzyme catalyses AMP + diphosphate = 5-phospho-alpha-D-ribose 1-diphosphate + adenine. It participates in purine metabolism; AMP biosynthesis via salvage pathway; AMP from adenine: step 1/1. Its function is as follows. Catalyzes a salvage reaction resulting in the formation of AMP, that is energically less costly than de novo synthesis. This is Adenine phosphoribosyltransferase from Natranaerobius thermophilus (strain ATCC BAA-1301 / DSM 18059 / JW/NM-WN-LF).